Here is a 341-residue protein sequence, read N- to C-terminus: S-adenosylmethionine:tRNA ribosyltransferase-isomerase (341 aa).

It belongs to the QueA family. Monomer.

The protein resides in the cytoplasm. It catalyses the reaction 7-aminomethyl-7-carbaguanosine(34) in tRNA + S-adenosyl-L-methionine = epoxyqueuosine(34) in tRNA + adenine + L-methionine + 2 H(+). It functions in the pathway tRNA modification; tRNA-queuosine biosynthesis. Its function is as follows. Transfers and isomerizes the ribose moiety from AdoMet to the 7-aminomethyl group of 7-deazaguanine (preQ1-tRNA) to give epoxyqueuosine (oQ-tRNA). This is S-adenosylmethionine:tRNA ribosyltransferase-isomerase from Chlorobium chlorochromatii (strain CaD3).